Reading from the N-terminus, the 101-residue chain is Small ribosomal subunit protein uS14 (101 aa).

This sequence belongs to the universal ribosomal protein uS14 family. As to quaternary structure, part of the 30S ribosomal subunit. Contacts proteins S3 and S10.

Functionally, binds 16S rRNA, required for the assembly of 30S particles and may also be responsible for determining the conformation of the 16S rRNA at the A site. This Orientia tsutsugamushi (strain Boryong) (Rickettsia tsutsugamushi) protein is Small ribosomal subunit protein uS14.